The following is a 258-amino-acid chain: MKITKLEKKKRLYLMELDGQQTSYITEDTIVRFMLSRDKVISKEELTEIQDFAQFSYGKNLALYHLSFKARTEKEVREYLKKYDIDKNIVSQVIANLKEDKWINDGQYAYAIINTNQLSGDKGPYVLTQKLAQKGISKSTIEENLKEFDFSEVAQRVANKLLKKYEGKLPSRALQDKIIQNLTNKGFSYSDAKIAFDDLDSQVDQETTQELIFKELDKQYSKYARKYEGYELKQRLTQVLARKGYDFSDIASALREYL.

This sequence belongs to the RecX family.

The protein resides in the cytoplasm. Its function is as follows. Modulates RecA activity. The sequence is that of Regulatory protein RecX from Streptococcus pneumoniae (strain P1031).